We begin with the raw amino-acid sequence, 294 residues long: Indole-3-glycerol phosphate synthase (294 aa).

The protein belongs to the TrpC family.

It catalyses the reaction 1-(2-carboxyphenylamino)-1-deoxy-D-ribulose 5-phosphate + H(+) = (1S,2R)-1-C-(indol-3-yl)glycerol 3-phosphate + CO2 + H2O. It functions in the pathway amino-acid biosynthesis; L-tryptophan biosynthesis; L-tryptophan from chorismate: step 4/5. This Synechococcus sp. (strain WH7803) protein is Indole-3-glycerol phosphate synthase.